The following is a 1893-amino-acid chain: Endoribonuclease Dicer (1893 aa).

One can recognise a Helicase ATP-binding domain in the interval 41–217 (LLEAALDHNT…DLEEKIQKLE (177 aa)). Residue 54–61 (LNSGSGKT) participates in ATP binding. The short motif at 165-168 (DECH) is the DECH box element. The interval 400–424 (VSWSDSEDDDDEDEEIEEKEKTETS) is disordered. Acidic residues predominate over residues 404–416 (DSEDDDDEDEEIE). One can recognise a Helicase C-terminal domain in the interval 424-593 (SFPSPFTNIL…SIDCGNTESE (170 aa)). The Dicer dsRNA-binding fold domain maps to 621–713 (AIGHINRYCA…MPVGKETVKY (93 aa)). The disordered stretch occupies residues 718 to 737 (DLHDEEETSVPGRPGSTKRR). The region spanning 886 to 1036 (KFVEDIEKSE…LVPELCAIHP (151 aa)) is the PAZ domain. 2 RNase III domains span residues 1249-1380 (TSDM…ETSG) and 1637-1795 (FENF…MDSG). 6 residues coordinate Mg(2+): Glu-1293, Asp-1371, Glu-1374, Glu-1676, Asp-1781, and Glu-1784. Residues 1820–1885 (VPRSPVRELL…ARRALRSLKA (66 aa)) form the DRBM domain.

The protein belongs to the helicase family. Dicer subfamily. Component of the RISC loading complex (RLC), or micro-RNA (miRNA) loading complex (miRLC), which is composed of dicer1, ago2 and tarbp2; dicer1 and tarbp2 are required to process precursor miRNAs (pre-miRNAs) to mature miRNAs and then load them onto ago2. Note that the trimeric RLC/miRLC is also referred to as RISC. Requires Mg(2+) as cofactor. The cofactor is Mn(2+).

The protein resides in the cytoplasm. It catalyses the reaction Endonucleolytic cleavage to 5'-phosphomonoester.. Its function is as follows. Double-stranded RNA (dsRNA) endoribonuclease playing a central role in short dsRNA-mediated post-transcriptional gene silencing. Cleaves naturally occurring long dsRNAs and short hairpin pre-microRNAs (miRNA) into fragments of twenty-one to twenty-three nucleotides with 3' overhang of two nucleotides, producing respectively short interfering RNAs (siRNA) and mature microRNAs. SiRNAs and miRNAs serve as guide to direct the RNA-induced silencing complex (RISC) to complementary RNAs to degrade them or prevent their translation. Gene silencing mediated by siRNAs, also called RNA interference, controls the elimination of transcripts from mobile and repetitive DNA elements of the genome but also the degradation of exogenous RNA of viral origin for instance. The miRNA pathway on the other side is a mean to specifically regulate the expression of target genes. The polypeptide is Endoribonuclease Dicer (dicer1) (Xenopus tropicalis (Western clawed frog)).